The sequence spans 435 residues: MRLSRFLLPTLKETPSEAEIVSHRLMLRAGMIRQHASGIYNWLPLGLRVLRKIEQVVREEQDATGAQEILMPTIQSADLWRESGRYDDYGKEMLRIVDRHERDMLYGPTHEEVATDVFRKNVKSYRALPQNLYQIQWKFRDEVRPRFGVMRGREFLMKDNYSFDLTYEGARHSYNKMFVAYLRTFARLGLKAIPMAADTGPIGGKLSHEFIILADTGESAVFCHRDLLDKPAPENVDYDSDLQPLVDSWTSLYAATDEMHRPDHGVPEGDLVSARGIEVGHIFHFGTKYSAPMGATVTAPDGSSQAVFMGSYGIGVSRLVAGIIEASHDDNGIIWPDGVAPFDIGVINLKVGDAATDGVCADLYGRLRAAGKDVLFDDTDDRAGAKFATMDLIGLPWQVIAGPKGVAKGMVELKERATGERHELSIDSALAKLLG.

The protein belongs to the class-II aminoacyl-tRNA synthetase family. ProS type 2 subfamily. Homodimer.

It localises to the cytoplasm. It carries out the reaction tRNA(Pro) + L-proline + ATP = L-prolyl-tRNA(Pro) + AMP + diphosphate. Catalyzes the attachment of proline to tRNA(Pro) in a two-step reaction: proline is first activated by ATP to form Pro-AMP and then transferred to the acceptor end of tRNA(Pro). The protein is Proline--tRNA ligase of Rhodospirillum rubrum (strain ATCC 11170 / ATH 1.1.1 / DSM 467 / LMG 4362 / NCIMB 8255 / S1).